Here is an 85-residue protein sequence, read N- to C-terminus: Kunitz-type serine protease inhibitor homolog beta-bungarotoxin B3 chain (85 aa).

Residues 1–24 (MSSGGLLLLLGLLTLCAELIPVSS) form the signal peptide. Residues 31-81 (CDKPPDKGNCGPVRRAFYYDTRLKTCKAFQYRGCNGNGNHFKSDHLCRCEC) enclose the BPTI/Kunitz inhibitor domain. Disulfide bonds link cysteine 31/cysteine 81, cysteine 40/cysteine 64, and cysteine 56/cysteine 77.

The protein belongs to the venom Kunitz-type family. In terms of assembly, heterodimer; disulfide-linked. The A chains have phospholipase A2 activity and the B chains show homology with the basic protease inhibitors. Expressed by the venom gland.

Its subcellular location is the secreted. Functionally, beta-bungarotoxins are presynaptic neurotoxins of the venom. The B chain is homologous to venom basic protease inhibitors but has no protease inhibitor activity and blocks voltage-gated potassium channels (Kv). The sequence is that of Kunitz-type serine protease inhibitor homolog beta-bungarotoxin B3 chain from Bungarus multicinctus (Many-banded krait).